A 105-amino-acid chain; its full sequence is Small ribosomal subunit protein uS10 (105 aa).

Belongs to the universal ribosomal protein uS10 family. In terms of assembly, part of the 30S ribosomal subunit.

Its function is as follows. Involved in the binding of tRNA to the ribosomes. The sequence is that of Small ribosomal subunit protein uS10 from Maridesulfovibrio salexigens (strain ATCC 14822 / DSM 2638 / NCIMB 8403 / VKM B-1763) (Desulfovibrio salexigens).